A 514-amino-acid polypeptide reads, in one-letter code: 2-isopropylmalate synthase (514 aa).

One can recognise a Pyruvate carboxyltransferase domain in the interval 5–267 (LIIFDTTLRD…HTDIETREIV (263 aa)). Mn(2+) is bound by residues Asp-14, His-202, His-204, and Asn-238. The regulatory domain stretch occupies residues 393-514 (KLVALRVCSE…QRTHPQVGDV (122 aa)).

Belongs to the alpha-IPM synthase/homocitrate synthase family. LeuA type 1 subfamily. As to quaternary structure, homodimer. Mn(2+) is required as a cofactor.

The protein resides in the cytoplasm. It carries out the reaction 3-methyl-2-oxobutanoate + acetyl-CoA + H2O = (2S)-2-isopropylmalate + CoA + H(+). Its pathway is amino-acid biosynthesis; L-leucine biosynthesis; L-leucine from 3-methyl-2-oxobutanoate: step 1/4. Its function is as follows. Catalyzes the condensation of the acetyl group of acetyl-CoA with 3-methyl-2-oxobutanoate (2-ketoisovalerate) to form 3-carboxy-3-hydroxy-4-methylpentanoate (2-isopropylmalate). The chain is 2-isopropylmalate synthase from Methylococcus capsulatus (strain ATCC 33009 / NCIMB 11132 / Bath).